Here is a 364-residue protein sequence, read N- to C-terminus: DNA-(apurinic or apyrimidinic site) endonuclease (364 aa).

2 stretches are compositionally biased toward basic and acidic residues: residues 1-12 (MKRFFKPIEKEN) and 23-39 (PEKR…EKNQ). A disordered region spans residues 1 to 42 (MKRFFKPIEKENSPAAKKPCLSPEKRDGDGDGVEEEKNQNEP). Position 80 (Glu-80) interacts with Mg(2+). The active site involves Tyr-182. Mg(2+)-binding residues include Asp-222, Asn-224, and Asp-342. The active-site Proton donor/acceptor is Asp-222.

Belongs to the DNA repair enzymes AP/exoA family. Interacts with ROS1. ROS1 is required for APE1L to stably associate with the DNA substrate. Mg(2+) is required as a cofactor. In terms of tissue distribution, expressed in leaves, flower buds and developing siliques. Not detected in roots.

It is found in the nucleus. The protein resides in the nucleolus. Functionally, apurinic/apyrimidinic (AP) endonuclease involved in active DNA demethylation and gene imprinting. According to a report, also displays an in vitro 3'-phosphatase activity. According to another report, has no in vitro 3'-phosphatase activity. Catalyzes the conversion of the 3'-blocking groups 3'-phosphor-alpha,beta-unsaturated aldehyde (3'-PUA) generated by ROS1 to 3'-OH. Has a strong non-specific affinity to DNA. Redundant with APE2 and at least one functional allele is required for seed viability. This is DNA-(apurinic or apyrimidinic site) endonuclease from Arabidopsis thaliana (Mouse-ear cress).